Here is a 679-residue protein sequence, read N- to C-terminus: Single-strand DNA endonuclease ASTE1 (679 aa).

The interaction with SHLD2 stretch occupies residues 351-400; the sequence is TILPTQVENMQQPNAHRISQPIRQIIYGLLLNASPHLDKTSWNALPPQPL. Residues 625 to 645 form a disordered region; sequence RSNSKKKRQKKQNTSCSKNRG. A compositionally biased stretch (basic residues) spans 626 to 635; sequence SNSKKKRQKK.

Belongs to the asteroid family. In terms of assembly, interacts with SHLD1, SHLD2, SHLD3, RIF1 and MAD2L2/REV7.

In terms of biological role, structure-specific DNA endonuclease that specifically cleaves single-stranded DNA and 3' overhang DNA. Contributes to the control of DNA double-strand break repair choice by antagonizing BRCA1-dependent homologous recombination (HR) and promoting non-homologous end-joining (NHEJ). Recruited to the single-stranded DNA ends by SHLD2 and cleaves the 3' exposed DNA ends, therefore inhibiting DNA end resection (necessary for HR) and promoting DNA end protection (necessary for NHEJ). The chain is Single-strand DNA endonuclease ASTE1 (ASTE1) from Homo sapiens (Human).